The primary structure comprises 72 residues: uncharacterized protein (72 aa).

It belongs to the baculoviridae 8 kDa protein family.

This is an uncharacterized protein from Orgyia pseudotsugata (Douglas-fir tussock moth).